Reading from the N-terminus, the 290-residue chain is 7-methylguanosine phosphate-specific 5'-nucleotidase A (290 aa).

D39 (nucleophile) is an active-site residue. Residues D39 and D41 each coordinate Mg(2+). D41 functions as the Proton donor in the catalytic mechanism. E86 is a CMP binding site. N(7)-methyl-GMP is bound at residue E86. Substrate contacts are provided by residues 154-155 (SA) and K203. Position 228 (D228) interacts with Mg(2+).

The protein belongs to the pyrimidine 5'-nucleotidase family. As to quaternary structure, monomer.

The protein localises to the cytoplasm. The catalysed reaction is N(7)-methyl-GMP + H2O = N(7)-methylguanosine + phosphate. It catalyses the reaction CMP + H2O = cytidine + phosphate. The enzyme catalyses a ribonucleoside 5'-phosphate + H2O = a ribonucleoside + phosphate. Its function is as follows. Specifically hydrolyzes 7-methylguanosine monophosphate (m(7)GMP) to 7-methylguanosine and inorganic phosphate. The specific activity for m(7)GMP may protect cells against undesired salvage of m(7)GMP and its incorporation into nucleic acids. Also has weak activity for CMP. UMP and purine nucleotides are poor substrates. The sequence is that of 7-methylguanosine phosphate-specific 5'-nucleotidase A (Nt5c3b-a) from Xenopus laevis (African clawed frog).